Consider the following 35-residue polypeptide: Cecropin (35 aa).

I35 carries the isoleucine amide modification.

This sequence belongs to the cecropin family.

The protein localises to the secreted. In terms of biological role, cecropins have lytic and antibacterial activity against several Gram-positive and Gram-negative bacteria. This Bombyx mori (Silk moth) protein is Cecropin.